The chain runs to 557 residues: Dihydroxy-acid dehydratase (557 aa).

Cys-47 is a binding site for [2Fe-2S] cluster. Mg(2+) is bound at residue Asp-79. Cys-120 is a binding site for [2Fe-2S] cluster. The Mg(2+) site is built by Asp-121 and Lys-122. An N6-carboxylysine modification is found at Lys-122. Cys-192 serves as a coordination point for [2Fe-2S] cluster. Residue Glu-444 coordinates Mg(2+). The active-site Proton acceptor is the Ser-470.

This sequence belongs to the IlvD/Edd family. In terms of assembly, homodimer. [2Fe-2S] cluster is required as a cofactor. Mg(2+) serves as cofactor.

The enzyme catalyses (2R)-2,3-dihydroxy-3-methylbutanoate = 3-methyl-2-oxobutanoate + H2O. It catalyses the reaction (2R,3R)-2,3-dihydroxy-3-methylpentanoate = (S)-3-methyl-2-oxopentanoate + H2O. It participates in amino-acid biosynthesis; L-isoleucine biosynthesis; L-isoleucine from 2-oxobutanoate: step 3/4. Its pathway is amino-acid biosynthesis; L-valine biosynthesis; L-valine from pyruvate: step 3/4. Functions in the biosynthesis of branched-chain amino acids. Catalyzes the dehydration of (2R,3R)-2,3-dihydroxy-3-methylpentanoate (2,3-dihydroxy-3-methylvalerate) into 2-oxo-3-methylpentanoate (2-oxo-3-methylvalerate) and of (2R)-2,3-dihydroxy-3-methylbutanoate (2,3-dihydroxyisovalerate) into 2-oxo-3-methylbutanoate (2-oxoisovalerate), the penultimate precursor to L-isoleucine and L-valine, respectively. The sequence is that of Dihydroxy-acid dehydratase from Parasynechococcus marenigrum (strain WH8102).